Reading from the N-terminus, the 106-residue chain is Small ribosomal subunit protein uS10 (106 aa).

This sequence belongs to the universal ribosomal protein uS10 family. In terms of assembly, part of the 30S ribosomal subunit.

Functionally, involved in the binding of tRNA to the ribosomes. In Wolbachia pipientis subsp. Culex pipiens (strain wPip), this protein is Small ribosomal subunit protein uS10.